The sequence spans 259 residues: Probable iron export permease protein FetB (259 aa).

The Periplasmic portion of the chain corresponds to 1-5 (MNSHN). Residues 6-26 (ITNESLALALMLVVVAILISH) traverse the membrane as a helical segment. Residues 27-35 (KEKLALEKD) lie on the Cytoplasmic side of the membrane. A run of 2 helical transmembrane segments spans residues 36–56 (ILWS…VLKY) and 57–77 (IFSV…CFNA). The Cytoplasmic segment spans residues 78–91 (AWNAQKRSKYIAKA). Residues 92 to 112 (FISSFIAITVGAGITLAVLIL) traverse the membrane as a helical segment. Over 113–117 (SGSIE) the chain is Periplasmic. A helical transmembrane segment spans residues 118 to 138 (FIPMQVIPIAGMIAGNAMVAV). The Cytoplasmic segment spans residues 139–191 (GLCYNNLGQRVISEQQQIQEKLSLGATPKQASAILIRDSIRAALIPTVDSAKT). A helical transmembrane segment spans residues 192–212 (VGLVSLPGMMSGLIFAGIDPV). Over 213–218 (KAIKYQ) the chain is Periplasmic. Residues 219–239 (IMVTFMLLSTASLSTIIACYL) form a helical membrane-spanning segment. Residues 240–259 (TYRKFYNSRHQLVVTQLKKK) are Cytoplasmic-facing.

Belongs to the UPF0014 family. As to quaternary structure, the complex is composed of two ATP-binding proteins (FetA) and two transmembrane proteins (FetB).

The protein localises to the cell inner membrane. Its function is as follows. Part of the ABC transporter complex FetAB, which is probably involved in iron export and enhances resistance to H(2)O(2)-mediated oxidative stress. Probably responsible for the translocation of the substrate across the membrane. This chain is Probable iron export permease protein FetB (fetB), found in Escherichia coli (strain K12).